The sequence spans 1669 residues: Collagen alpha-1(IV) chain (1669 aa).

The first 27 residues, 1–27, serve as a signal peptide directing secretion; the sequence is MGPRLSVWLLLLPAALLLHEEHSRAAA. The propeptide at 28–172 is N-terminal propeptide (7S domain); it reads KGGCAGSGCG…LGHVPGMLLK (145 aa). Disordered stretches follow at residues 48–459, 504–1382, and 1404–1431; these read KGER…EIGE, GRDG…PKGQ, and PGQK…DGLP. Asparagine 126 carries N-linked (GlcNAc...) asparagine glycosylation. The tract at residues 173 to 1440 is triple-helical region; that stretch reads GERGFPGIPG…PGSMGPPGTP (1268 aa). Residues 196–214 are compositionally biased toward pro residues; sequence VGPPGFTGPPGPPGPPGPP. Residues proline 204, proline 207, and proline 210 each carry the 3-hydroxyproline modification. Positions 234 to 249 are enriched in low complexity; the sequence is QGVSGPPGVPGQAQVQ. Composition is skewed to basic and acidic residues over residues 250 to 263 and 289 to 298; these read EKGD…KGQK and PGKDGDKGEK. 3 stretches are compositionally biased toward pro residues: residues 367–376, 413–424, and 436–448; these read PGQPGPPGLP, PGPPGSPGPPGQ, and PGPP…PGIP. Positions 535–545 are enriched in basic and acidic residues; that stretch reads FDLRLKGDKGD. Gly residues predominate over residues 586 to 595; the sequence is GPPGGVGFPG. Residues proline 587 and proline 602 each carry the 3-hydroxyproline modification. Proline 603 carries the 4-hydroxyproline modification. A 3-hydroxyproline modification is found at proline 605. Residue proline 606 is modified to 4-hydroxyproline. The span at 611 to 620 shows a compositional bias: low complexity; sequence AGPIGDKGQA. The segment covering 621–630 has biased composition (gly residues); it reads GFPGGPGSPG. Proline 623, proline 626, proline 629, and proline 632 each carry 4-hydroxyproline. Proline 647 bears the 3-hydroxyproline mark. Over residues 797-817 the composition is skewed to gly residues; sequence GVPGIGPPGARGPPGGQGPPG. Low complexity-rich tracts occupy residues 856–875 and 977–986; these read QSGL…PGFP and PGKDGQAGQP. Positions 1011–1020 are enriched in gly residues; that stretch reads GSVGGMGLPG. Positions 1086–1114 are enriched in low complexity; it reads SIGIPGMPGSPGLKGSPGSVGYPGSPGLP. Proline 1214 is modified (3-hydroxyproline). A compositionally biased stretch (pro residues) spans 1247–1258; that stretch reads PGLPGPMGPPGL. The span at 1290–1299 shows a compositional bias: gly residues; sequence GMPGIGGSPG. Over residues 1368 to 1382 the composition is skewed to low complexity; sequence PGLKGLQGLPGPKGQ. Position 1424 is a 3-hydroxyproline (proline 1424). The Collagen IV NC1 domain maps to 1445-1669; it reads GFLVTRHSQT…SRCQVCMRRT (225 aa). 6 disulfides stabilise this stretch: cysteine 1460–cysteine 1551, cysteine 1493–cysteine 1548, cysteine 1505–cysteine 1511, cysteine 1570–cysteine 1665, cysteine 1604–cysteine 1662, and cysteine 1616–cysteine 1622. Residue methionine 1533 forms an S-Lysyl-methionine sulfilimine (Met-Lys) (interchain with K-1651) linkage. Lysine 1651 is covalently cross-linked (S-Lysyl-methionine sulfilimine (Lys-Met) (interchain with M-1533)).

This sequence belongs to the type IV collagen family. As to quaternary structure, there are six type IV collagen isoforms, alpha 1(IV)-alpha 6(IV), each of which can form a triple helix structure with 2 other chains to generate type IV collagen network. Interacts with EFEMP2. Lysines at the third position of the tripeptide repeating unit (G-X-Y) are hydroxylated. The modified lysines can be O-glycosylated. In terms of processing, contains 4-hydroxyproline. Prolines at the third position of the tripeptide repeating unit (G-X-Y) are hydroxylated in some or all of the chains. Post-translationally, contains 3-hydroxyproline. This modification occurs on the first proline residue in the sequence motif Gly-Pro-Hyp, where Hyp is 4-hydroxyproline. Type IV collagens contain numerous cysteine residues which are involved in inter- and intramolecular disulfide bonding. 12 of these, located in the NC1 domain, are conserved in all known type IV collagens. In terms of processing, the trimeric structure of the NC1 domains is stabilized by covalent bonds (sulfilimine cross-links) between Lys and Met residues. These cross-links are important for the mechanical stability of the basement membrane. Sulfilimine cross-link is catalyzed by PXDN. Post-translationally, proteolytic processing produces the C-terminal NC1 peptide, arresten. In terms of tissue distribution, highly expressed in placenta.

The protein resides in the secreted. Its subcellular location is the extracellular space. The protein localises to the extracellular matrix. It localises to the basement membrane. Its function is as follows. Type IV collagen is the major structural component of glomerular basement membranes (GBM), forming a 'chicken-wire' meshwork together with laminins, proteoglycans and entactin/nidogen. In terms of biological role, arresten, comprising the C-terminal NC1 domain, inhibits angiogenesis and tumor formation. The C-terminal half is found to possess the anti-angiogenic activity. Specifically inhibits endothelial cell proliferation, migration and tube formation. This is Collagen alpha-1(IV) chain from Homo sapiens (Human).